The following is a 374-amino-acid chain: Alcohol dehydrogenase class-3 (374 aa).

Serine 2 carries the post-translational modification N-acetylserine. Residues cysteine 45, histidine 67, cysteine 97, cysteine 100, cysteine 103, cysteine 111, and cysteine 174 each coordinate Zn(2+). N6-succinyllysine is present on lysine 233. A Phosphoserine modification is found at serine 247. Lysine 315 carries the N6-succinyllysine modification. Serine 324 and serine 351 each carry phosphoserine.

The protein belongs to the zinc-containing alcohol dehydrogenase family. Class-III subfamily. In terms of assembly, homodimer. Requires Zn(2+) as cofactor.

Its subcellular location is the cytoplasm. It carries out the reaction a primary alcohol + NAD(+) = an aldehyde + NADH + H(+). It catalyses the reaction a secondary alcohol + NAD(+) = a ketone + NADH + H(+). The catalysed reaction is S-(hydroxymethyl)glutathione + NADP(+) = S-formylglutathione + NADPH + H(+). The enzyme catalyses S-(hydroxymethyl)glutathione + NAD(+) = S-formylglutathione + NADH + H(+). It carries out the reaction 20-oxo-(5Z,8Z,11Z,14Z)-eicosatetraenoate + NAD(+) + H2O = (5Z,8Z,11Z,14Z)-eicosatetraenedioate + NADH + 2 H(+). It catalyses the reaction 20-hydroxy-(5Z,8Z,11Z,14Z)-eicosatetraenoate + NAD(+) = 20-oxo-(5Z,8Z,11Z,14Z)-eicosatetraenoate + NADH + H(+). The catalysed reaction is S-nitrosoglutathione + NADH + H(+) = S-(hydroxysulfenamide)glutathione + NAD(+). Functionally, catalyzes the oxidation of long-chain primary alcohols and the oxidation of S-(hydroxymethyl) glutathione. Also oxidizes long chain omega-hydroxy fatty acids, such as 20-HETE, producing both the intermediate aldehyde, 20-oxoarachidonate and the end product, a dicarboxylic acid, (5Z,8Z,11Z,14Z)-eicosatetraenedioate. Class-III ADH is remarkably ineffective in oxidizing ethanol. Required for clearance of cellular formaldehyde, a cytotoxic and carcinogenic metabolite that induces DNA damage. Also acts as a S-nitroso-glutathione reductase by catalyzing the NADH-dependent reduction of S-nitrosoglutathione, thereby regulating protein S-nitrosylation. In Equus caballus (Horse), this protein is Alcohol dehydrogenase class-3.